The following is an 81-amino-acid chain: Small ribosomal subunit protein bS18A (81 aa).

Belongs to the bacterial ribosomal protein bS18 family. Part of the 30S ribosomal subunit. Forms a tight heterodimer with protein bS6.

Binds as a heterodimer with protein bS6 to the central domain of the 16S rRNA, where it helps stabilize the platform of the 30S subunit. The sequence is that of Small ribosomal subunit protein bS18A from Saccharopolyspora erythraea (strain ATCC 11635 / DSM 40517 / JCM 4748 / NBRC 13426 / NCIMB 8594 / NRRL 2338).